We begin with the raw amino-acid sequence, 669 residues long: DNA ligase (669 aa).

NAD(+)-binding positions include 35–39, 84–85, and Glu-114; these read DSEYD and SL. The N6-AMP-lysine intermediate role is filled by Lys-116. NAD(+) is bound by residues Arg-137, Glu-171, Lys-287, and Lys-311. Zn(2+) contacts are provided by Cys-405, Cys-408, Cys-423, and Cys-428. The 79-residue stretch at 591–669 folds into the BRCT domain; that stretch reads DSDSYFAGKT…EAQLLGELKK (79 aa).

The protein belongs to the NAD-dependent DNA ligase family. LigA subfamily. Mg(2+) serves as cofactor. Requires Mn(2+) as cofactor.

The catalysed reaction is NAD(+) + (deoxyribonucleotide)n-3'-hydroxyl + 5'-phospho-(deoxyribonucleotide)m = (deoxyribonucleotide)n+m + AMP + beta-nicotinamide D-nucleotide.. DNA ligase that catalyzes the formation of phosphodiester linkages between 5'-phosphoryl and 3'-hydroxyl groups in double-stranded DNA using NAD as a coenzyme and as the energy source for the reaction. It is essential for DNA replication and repair of damaged DNA. This chain is DNA ligase, found in Bacillus velezensis (strain DSM 23117 / BGSC 10A6 / LMG 26770 / FZB42) (Bacillus amyloliquefaciens subsp. plantarum).